We begin with the raw amino-acid sequence, 759 residues long: Zinc finger protein 287 (759 aa).

Positions 42-124 constitute an SCAN box domain; that stretch reads RRNFRNFPYP…ALVEDLTQIL (83 aa). Residues 127–154 form a disordered region; it reads EEAPQSSALPQDTPEDDPNHDPNPASQA. The KRAB domain occupies 166–234; sequence VTFNDVAVDI…IKEIVEGPNP (69 aa). C2H2-type zinc fingers lie at residues 366 to 388, 394 to 416, 422 to 444, 450 to 472, 478 to 500, 506 to 528, 534 to 556, 562 to 584, 590 to 612, 618 to 640, 646 to 668, 674 to 696, 702 to 724, and 730 to 752; these read YSCN…RENH, YECE…QRMH, YECH…QRIH, YKCE…QRTH, YKCL…QRVH, YICN…QKIH, YKCN…QRIH, YKCT…QTTH, YICN…HRTH, YKCS…QRIH, FKCN…QRVH, YKCH…RRTH, and YGCR…QRVH.

This sequence belongs to the krueppel C2H2-type zinc-finger protein family. As to expression, expressed in brain and at low levels in kidney and spleen and few hematopoietic cell lines.

It localises to the nucleus. May be involved in transcriptional regulation. In Mus musculus (Mouse), this protein is Zinc finger protein 287.